Consider the following 269-residue polypeptide: Diaminopimelate epimerase (269 aa).

3 residues coordinate substrate: Asn13, Gln46, and Asn65. Cys74 functions as the Proton donor in the catalytic mechanism. Residues 75–76, Asn149, Asn182, and 200–201 contribute to the substrate site; these read GN and ER. Cys209 acts as the Proton acceptor in catalysis. Substrate is bound at residue 210-211; it reads GT.

The protein belongs to the diaminopimelate epimerase family. Homodimer.

Its subcellular location is the cytoplasm. The catalysed reaction is (2S,6S)-2,6-diaminopimelate = meso-2,6-diaminopimelate. Its pathway is amino-acid biosynthesis; L-lysine biosynthesis via DAP pathway; DL-2,6-diaminopimelate from LL-2,6-diaminopimelate: step 1/1. In terms of biological role, catalyzes the stereoinversion of LL-2,6-diaminopimelate (L,L-DAP) to meso-diaminopimelate (meso-DAP), a precursor of L-lysine and an essential component of the bacterial peptidoglycan. This chain is Diaminopimelate epimerase, found in Zymomonas mobilis subsp. mobilis (strain ATCC 31821 / ZM4 / CP4).